The chain runs to 426 residues: MKHLTEMVRQHKEGKTNGIYAVCSAHPLVLEAAIRYASANQTPLLIEATSNQVDQFGGYTGMTPADFRGFVCQLADSLNFPQDALILGGDHLGPNRWQNLPAAQAMANADDLIKSYVAAGFKKIHLDCSMSCQDDPIPLTDDIVAERAARLAKVAEETCREHFGAADLEYVIGTEVPVPGGAHETLSELAVTTPDAARATLEAHRHAFEKQGLSAIWPRIIALVVQPGVEFDHTNVIDYQPVKATALSQMVENYETLIFEAHSTDYQTPQSLRQLVIDHFAILKVGPALTFALREALFSLAAIEEELVPAKACSGLRQVLENVMLDRPEYWQSHYHGDGNARRLARGYSYSDRVRYYWPDSQIDDAFAHLVRNLADSPIPLPLISQYLPLQYVKVRSGELQPTPRELIINHIQDILAQYHTACEGQ.

Belongs to the GatZ/KbaZ family. KbaZ subfamily. Forms a complex with KbaY.

It functions in the pathway carbohydrate metabolism; D-tagatose 6-phosphate degradation; D-glyceraldehyde 3-phosphate and glycerone phosphate from D-tagatose 6-phosphate: step 2/2. Functionally, component of the tagatose-1,6-bisphosphate aldolase KbaYZ that is required for full activity and stability of the Y subunit. Could have a chaperone-like function for the proper and stable folding of KbaY. When expressed alone, KbaZ does not show any aldolase activity. The sequence is that of D-tagatose-1,6-bisphosphate aldolase subunit KbaZ from Escherichia coli (strain SMS-3-5 / SECEC).